Reading from the N-terminus, the 173-residue chain is Small ribosomal subunit protein uS9 (173 aa).

The disordered stretch occupies residues 20 to 53 (SYTTESEVPVEGEYTSESVASRFGEPQPAAGLGR).

It belongs to the universal ribosomal protein uS9 family.

This is Small ribosomal subunit protein uS9 from Streptomyces avermitilis (strain ATCC 31267 / DSM 46492 / JCM 5070 / NBRC 14893 / NCIMB 12804 / NRRL 8165 / MA-4680).